Reading from the N-terminus, the 693-residue chain is MEHQDLTDSRKDPLCISQLKISSSSLDPLPQANMAEDLTKSRRHSPIKVEGSEETWGVEDDDDLTDPIFDTIEGNGHSDPTSCFDADLSEYKKKATVIVEEYFGTNDVVSVVNELKELGMAEYRYYFVKKLVSMAMDRHDKEKEMAAFLLSTLYADVIDPPEVYRGFNKLVASADDLSVDIPDAVDVLAVFVARAIVDDILPPAFLKKQMKLLPDNSKGVEVLRKAEKSYLATPLHAEVVEKRWGGTDNWTAEDVKARINDLLKEYVMSGDKKEAFRCIKGLKVPFFHHEIVKRALIMAMERRKAQVRLLDLLKETIEVGLINSTQVTKGFSRIIDSIEDLSLDIPDARRILQSFISKAASEGWLCASSLKSLSADAGEKLLENSSANVFKDKAKSIIREYFLSGDTSEVVHCLDTELNASSSQLRAIFVKYLITLAMDRKKREKEMACVLVSTLGFPPKDVRSAFSMLIESADDTALDNPVVVEDLAMFLARAVVDEVLAPRDLEEVLNQTPEAGSSVGEKVIQMAKTLLKARLSGERILRCWGGGGIETNSPGSTVKEVKEKIQILLEEYVSGGDLREASRCVKELGMPFFHHEVVKKSVVRIIEEKENEERLWKLLKVCFDSGLVTIYQMTKGFKRVDESLEDLSLDVPDAAKKFSSCVERGKLEGFLDESFASEDSQSKKQNGSSSSSG.

Positions 25 to 60 (SLDPLPQANMAEDLTKSRRHSPIKVEGSEETWGVED) are disordered. Residues 90-211 (EYKKKATVIV…PPAFLKKQMK (122 aa)) enclose the MI 1 domain. Positions 241 to 248 (EKRWGGTD) match the Nuclear localization signal 1 motif. MI domains lie at 254–375 (DVKA…SLSA), 389–510 (VFKD…EVLN), and 560–681 (EVKE…EDSQ). The Nuclear localization signal 2 signature appears at 430–437 (VKYLITLA). The tract at residues 673-693 (ESFASEDSQSKKQNGSSSSSG) is disordered. Residues 683 to 693 (KKQNGSSSSSG) are compositionally biased toward low complexity.

The protein belongs to the PDCD4 family. In terms of assembly, binds to EIF4A1. The association with ribosomes is modulated by cellular energy status and TOR activity. As to expression, mostly expressed in reproductive tissues, such as flower buds and flowers, and, to a lower extent, in vegetative tissues, such as leaves, roots and stems.

It localises to the nucleus. The protein localises to the cytoplasm. It is found in the cytosol. Involved in target of rapamycin (TOR)-regulated translation control, especially under energy-deficient conditions. The chain is MA3 DOMAIN-CONTAINING TRANSLATION REGULATORY FACTOR 2 from Arabidopsis thaliana (Mouse-ear cress).